Reading from the N-terminus, the 396-residue chain is Purine ribonucleoside efflux pump NepI (396 aa).

The Cytoplasmic segment spans residues 1–21; it reads MSEFIAENRGANAITRPNWSA. A helical transmembrane segment spans residues 22 to 42; the sequence is VFSVAFCVACLIIVEFLPVSL. Residues 43–54 are Periplasmic-facing; it reads LTPMAQDLGISE. The chain crosses the membrane as a helical span at residues 55-75; that stretch reads GVAGQSVTVTAFVAMFASLFI. The Cytoplasmic portion of the chain corresponds to 76 to 85; sequence TQTIQATDRR. Residues 86–106 form a helical membrane-spanning segment; that stretch reads YVVILFAVLLTLSCLLVSFAN. Residue S107 is a topological domain, periplasmic. The helical transmembrane segment at 108-128 threads the bilayer; that stretch reads FSLLLIGRACLGVALGGFWAI. The Cytoplasmic portion of the chain corresponds to 129-147; the sequence is SASLTMRLVPPRTVPKALS. The chain crosses the membrane as a helical span at residues 148-168; sequence VIFGAVSIALVIAAPLGSFLG. The Periplasmic segment spans residues 169–175; that stretch reads ELIGWRN. A helical transmembrane segment spans residues 176-196; the sequence is VFNAAAAMGVLCIFWIIKSLP. The Cytoplasmic segment spans residues 197–215; sequence SLPGEPSHQKQNTFRLLQR. A helical membrane pass occupies residues 216 to 236; it reads PGVMAGMIAIFMSFAGQFAFF. At 237–255 the chain is on the periplasmic side; sequence TYIRPVYMNLAGFGVDGLT. A helical membrane pass occupies residues 256-276; the sequence is LVLLSFGIASFVGTSLSSFIL. Over 277–281 the chain is Cytoplasmic; sequence KRSVK. Residues 282 to 302 form a helical membrane-spanning segment; that stretch reads LALAGAPFVLALSALVLTLWG. Topologically, residues 303 to 305 are periplasmic; sequence SDK. A helical transmembrane segment spans residues 306–326; that stretch reads IVATGVAIIWGLTFALIPVGW. Residues 327-343 lie on the Cytoplasmic side of the membrane; sequence STWITRSLADQAEKAGS. A helical transmembrane segment spans residues 344 to 364; it reads IQVAVIQLANTCGAAIGGYAL. Over 365–366 the chain is Periplasmic; the sequence is DN. A helical transmembrane segment spans residues 367–387; sequence IGLTSPLMLSGTLMLLTALLV. The Cytoplasmic portion of the chain corresponds to 388 to 396; sequence TAKVKMKKS.

This sequence belongs to the major facilitator superfamily. DHA1 family. NepI (TC 2.A.1.2.26) subfamily.

Its subcellular location is the cell inner membrane. It carries out the reaction inosine(in) + H(+)(out) = inosine(out) + H(+)(in). The catalysed reaction is guanosine(in) + H(+)(out) = guanosine(out) + H(+)(in). Its function is as follows. Involved in the efflux of purine ribonucleosides, such as inosine and guanosine. This Escherichia coli O6:K15:H31 (strain 536 / UPEC) protein is Purine ribonucleoside efflux pump NepI.